A 615-amino-acid polypeptide reads, in one-letter code: DNA mismatch repair protein MutL (615 aa).

A disordered region spans residues 363–397 (FAEPAVREPVAPRYTPAPASGSRPAAPWPNAQPGY). Positions 378 to 391 (PAPASGSRPAAPWP) are enriched in low complexity.

Belongs to the DNA mismatch repair MutL/HexB family.

In terms of biological role, this protein is involved in the repair of mismatches in DNA. It is required for dam-dependent methyl-directed DNA mismatch repair. May act as a 'molecular matchmaker', a protein that promotes the formation of a stable complex between two or more DNA-binding proteins in an ATP-dependent manner without itself being part of a final effector complex. The chain is DNA mismatch repair protein MutL from Escherichia coli O157:H7.